The chain runs to 288 residues: Acetyl-coenzyme A carboxylase carboxyl transferase subunit beta (288 aa).

The region spanning 32 to 288 (LFAKCPACKH…LELHTEVENV (257 aa)) is the CoA carboxyltransferase N-terminal domain. Positions 36, 39, 54, and 57 each coordinate Zn(2+). The segment at 36 to 57 (CPACKHTIYQKDLGKNKVCPNC) adopts a C4-type zinc-finger fold.

The protein belongs to the AccD/PCCB family. As to quaternary structure, acetyl-CoA carboxylase is a heterohexamer composed of biotin carboxyl carrier protein (AccB), biotin carboxylase (AccC) and two subunits each of ACCase subunit alpha (AccA) and ACCase subunit beta (AccD). Requires Zn(2+) as cofactor.

The protein resides in the cytoplasm. The catalysed reaction is N(6)-carboxybiotinyl-L-lysyl-[protein] + acetyl-CoA = N(6)-biotinyl-L-lysyl-[protein] + malonyl-CoA. It participates in lipid metabolism; malonyl-CoA biosynthesis; malonyl-CoA from acetyl-CoA: step 1/1. Component of the acetyl coenzyme A carboxylase (ACC) complex. Biotin carboxylase (BC) catalyzes the carboxylation of biotin on its carrier protein (BCCP) and then the CO(2) group is transferred by the transcarboxylase to acetyl-CoA to form malonyl-CoA. This chain is Acetyl-coenzyme A carboxylase carboxyl transferase subunit beta, found in Lactococcus lactis subsp. cremoris (strain SK11).